Here is a 103-residue protein sequence, read N- to C-terminus: MALRSLGTTGLHIPPLVFGGNVFGWTVDEQQSFSLLDALLERGLNAIDTADVYSAWAPGNKGGESETILGKWFAAHPGAREKITLFTKVGSDLKAQRLMLRTM.

This is an uncharacterized protein from Pseudescherichia vulneris (Escherichia vulneris).